Here is a 147-residue protein sequence, read N- to C-terminus: MNPAHLLVLSAVCVSLLGAANIPPQHLDLYQFKEMIRYTIPCEKTWGEYADYGCYCGAGGSGTPIDALDRCCYVHDNCYGDAANIRDCDPKTQSYSYKLTKRTIICYGAAGTCARVVCDCDRTAALCFGNSEYIEGHKNIDTARFCQ.

Residues 1–19 (MNPAHLLVLSAVCVSLLGA) form the signal peptide. A propeptide spanning residues 20 to 27 (ANIPPQHL) is cleaved from the precursor. 6 disulfide bridges follow: cysteine 54/cysteine 146, cysteine 56/cysteine 72, cysteine 71/cysteine 127, cysteine 78/cysteine 120, cysteine 88/cysteine 113, and cysteine 106/cysteine 118. Ca(2+) contacts are provided by tyrosine 55, glycine 57, and glycine 59. Histidine 75 is an active-site residue. Aspartate 76 is a binding site for Ca(2+). Aspartate 121 is an active-site residue.

The protein belongs to the phospholipase A2 family. Group I subfamily. D49 sub-subfamily. In terms of assembly, heterodimer; disulfide-linked. The A chains have phospholipase A2 activity and the B chains show homology with the basic protease inhibitors. It depends on Ca(2+) as a cofactor. In terms of tissue distribution, expressed by the venom gland.

The protein localises to the secreted. The catalysed reaction is a 1,2-diacyl-sn-glycero-3-phosphocholine + H2O = a 1-acyl-sn-glycero-3-phosphocholine + a fatty acid + H(+). Snake venom phospholipase A2 (PLA2) that inhibits neuromuscular transmission by blocking acetylcholine release from the nerve termini. PLA2 catalyzes the calcium-dependent hydrolysis of the 2-acyl groups in 3-sn-phosphoglycerides. The polypeptide is Acidic phospholipase A2 beta-bungarotoxin A4 chain (Bungarus multicinctus (Many-banded krait)).